The sequence spans 123 residues: Small ribosomal subunit protein uS12c (123 aa).

Belongs to the universal ribosomal protein uS12 family. In terms of assembly, part of the 30S ribosomal subunit.

The protein resides in the plastid. It is found in the chloroplast. Its function is as follows. With S4 and S5 plays an important role in translational accuracy. Located at the interface of the 30S and 50S subunits. The sequence is that of Small ribosomal subunit protein uS12c (rps12) from Physcomitrium patens (Spreading-leaved earth moss).